The primary structure comprises 256 residues: Imidazole glycerol phosphate synthase subunit HisF (256 aa).

Residues aspartate 11 and aspartate 130 contribute to the active site.

Belongs to the HisA/HisF family. Heterodimer of HisH and HisF.

It localises to the cytoplasm. It catalyses the reaction 5-[(5-phospho-1-deoxy-D-ribulos-1-ylimino)methylamino]-1-(5-phospho-beta-D-ribosyl)imidazole-4-carboxamide + L-glutamine = D-erythro-1-(imidazol-4-yl)glycerol 3-phosphate + 5-amino-1-(5-phospho-beta-D-ribosyl)imidazole-4-carboxamide + L-glutamate + H(+). It participates in amino-acid biosynthesis; L-histidine biosynthesis; L-histidine from 5-phospho-alpha-D-ribose 1-diphosphate: step 5/9. Its function is as follows. IGPS catalyzes the conversion of PRFAR and glutamine to IGP, AICAR and glutamate. The HisF subunit catalyzes the cyclization activity that produces IGP and AICAR from PRFAR using the ammonia provided by the HisH subunit. The chain is Imidazole glycerol phosphate synthase subunit HisF from Psychrobacter sp. (strain PRwf-1).